The primary structure comprises 333 residues: Ferrochelatase (333 aa).

Residues His202 and Glu284 each contribute to the Fe cation site.

The protein belongs to the ferrochelatase family.

It localises to the cytoplasm. It catalyses the reaction heme b + 2 H(+) = protoporphyrin IX + Fe(2+). Its pathway is porphyrin-containing compound metabolism; protoheme biosynthesis; protoheme from protoporphyrin-IX: step 1/1. Catalyzes the ferrous insertion into protoporphyrin IX. This chain is Ferrochelatase, found in Francisella tularensis subsp. holarctica (strain LVS).